The following is a 1142-amino-acid chain: MANRPAASALAGARSPSERQEPREPEVAPPGGDHVFCRKVSGVMVLSSDPPGPAAYRISDSSFVQCGSNCSMIIDGDVARGHLRDLEGATSTGAFVAISNVAAGGDGRTAVVALGGTSGPSATTSVGTQTSGEFLHGNPRTPEPQGPQAVPPPPPPPFPWGHECCARRDARGGAEKDVGAAESWSDGPSSDSETEDSDSSDEDTGSETLSRSSSIWAAGATDDDDSDSDSRSDDSVQPDVVVRRRWSDGPAPVAFPKPRRPGDSPGNPGLGAGTGPGSATDPRASADSDSAAHAAAPQADVAPVLDSQPTVGTDPGYPVPLELTPENAEAVARFLGDAVDREPALMLEYFCRCAREESKRVPPRTFGSAPRLTEDDFGLLNYALAEMRRLCLDLPPVPPNAYTPYHLREYATRLVNGFKPLVRRSARLYRILGVLVHLRIRTREASFEEWMRSKEVDLDFGLTERLREHEAQLMILAQALNPYDCLIHSTPNTLVERGLQSALKYEEFYLKRFGGHYMESVFQMYTRIAGFLACRATRGMRHIALGRQGSWWEMFKFFFHRLYDHQIVPSTPAMLNLGTRNYYTSSCYLVNPQATTNQATLRAITGNVSAILARNGGIGLCMQAFNDASPGTASIMPALKVLDSLVAAHNKQSTRPTGACVYLEPWHSDVRAVLRMKGVLAGEEAQRCDNIFSALWMPDLFFKRLIRHLDGEKNVTWSLFDRDTSMSLADFHGEEFEKLYEHLEAMGFGETIPIQDLAYAIVRSAATTGSPFIMFKDAVNRHYIYDTQGAAIAGSNLCTEIVHPASKRSSGVCNLGSVNLARCVSRQTFDFGRLRDAVQACVLMVNIMIDSTLQPTPQCTRGNDNLRSMGIGMQGLHTACLKMGLDLESAEFRDLNTHIAEVMLLAAMKTSNALCVRGARPFSHFKRSMYRAGRFHWERFSNASPRYEGEWEMLRQSMMKHGLRNSQFIALMPTAASAQISDVSEGFAPLFTNLFSKVTRDGETLRPNTLLLKELERTFGGKRLLDAMDGLEAKQWSVAQALPCLDPAHPLRRFKTAFDYDQELLIDLCADRAPYVDHSQSMTLYVTEKADGTLPASTLVRLLVHAYKRGLKTGMYYCKVRKATNSGVFAGDDNIVCTSCAL.

Residues 1–33 (MANRPAASALAGARSPSERQEPREPEVAPPGGD) form a disordered region. Residues 16-26 (PSERQEPREPE) show a composition bias toward basic and acidic residues. An RIP homotypic interaction motif (RHIM) motif is present at residues 55 to 75 (AYRISDSSFVQCGSNCSMIID). The disordered stretch occupies residues 118 to 322 (SGPSATTSVG…TDPGYPVPLE (205 aa)). Residues 119-132 (GPSATTSVGTQTSG) are compositionally biased toward polar residues. Over residues 141 to 159 (TPEPQGPQAVPPPPPPPFP) the composition is skewed to pro residues. Basic and acidic residues predominate over residues 164–179 (CCARRDARGGAEKDVG). Residues 192–205 (SETEDSDSSDEDTG) are compositionally biased toward acidic residues. Positions 277–303 (GSATDPRASADSDSAAHAAAPQADVAP) are enriched in low complexity. Residues 294–400 (AAAPQADVAP…CLDLPPVPPN (107 aa)) form an alpha-crystallin domain region. Substrate-binding positions include Thr-571, 586-587 (SC), Gly-617, 796-800 (NLCTE), and 973-977 (PTAAS). Cys-587 and Cys-813 are oxidised to a cystine. Residue Asn-796 is the Proton acceptor of the active site. Cys-798 serves as the catalytic Cysteine radical intermediate. The active-site Proton acceptor is Glu-800.

Belongs to the ribonucleoside diphosphate reductase large chain family. In terms of assembly, heterotetramer composed of a homodimer of the large subunit (R1) and a homodimer of the small subunit (R2). Larger multisubunit protein complex are also active, composed of (R1)n(R2)n. May self-assemble (via RIP homotypic interaction motif/RHIM) into homomeric fibrillar amyloid structures. Interacts (via RHIM) with human RIPK1 (via RHIM). Interacts (via RHIM) with human RIPK3 (via RHIM). May interact (via RHIM) with human ZBP1 (via RHIM). Interacts (via C-terminus) with host CASP8.

The protein resides in the host cell membrane. The protein localises to the host endosome membrane. It catalyses the reaction a 2'-deoxyribonucleoside 5'-diphosphate + [thioredoxin]-disulfide + H2O = a ribonucleoside 5'-diphosphate + [thioredoxin]-dithiol. In terms of biological role, ribonucleoside-diphosphate reductase holoenzyme that provides the precursors necessary for viral DNA synthesis. Allows virus growth in non-dividing cells, as well as reactivation from latency in infected hosts. Catalyzes the biosynthesis of deoxyribonucleotides from the corresponding ribonucleotides. The N-terminal region confers antiapoptotic activity in differentiated cells such as neurons and is important for viral reactivation to increase neural survivability. Prevents host necroptosis by targeting host RIPK1 and RIPK3, thereby hampering the formation of necroptotic RIPK1-RIPK3 complexes. May form hetero-amyloid structures with host proteins RIPK3 or ZBP1, thereby preventing RIPK3- and ZBP1-mediated necroptosis. In addition, inhibits extrinsic apoptosis by targeting host CASP8. The sequence is that of Ribonucleoside-diphosphate reductase large subunit from Homo sapiens (Human).